The following is a 151-amino-acid chain: Arginine repressor (151 aa).

This sequence belongs to the ArgR family.

Its subcellular location is the cytoplasm. It participates in amino-acid biosynthesis; L-arginine biosynthesis [regulation]. Regulates arginine biosynthesis genes. The polypeptide is Arginine repressor (Haemophilus influenzae (strain PittGG)).